Here is a 198-residue protein sequence, read N- to C-terminus: ATP-dependent Clp protease proteolytic subunit 1 (198 aa).

The Nucleophile role is filled by S98. The active site involves H123.

The protein belongs to the peptidase S14 family. In terms of assembly, fourteen ClpP subunits assemble into 2 heptameric rings which stack back to back to give a disk-like structure with a central cavity, resembling the structure of eukaryotic proteasomes.

The protein localises to the cytoplasm. The enzyme catalyses Hydrolysis of proteins to small peptides in the presence of ATP and magnesium. alpha-casein is the usual test substrate. In the absence of ATP, only oligopeptides shorter than five residues are hydrolyzed (such as succinyl-Leu-Tyr-|-NHMec, and Leu-Tyr-Leu-|-Tyr-Trp, in which cleavage of the -Tyr-|-Leu- and -Tyr-|-Trp bonds also occurs).. Its function is as follows. Cleaves peptides in various proteins in a process that requires ATP hydrolysis. Has a chymotrypsin-like activity. Plays a major role in the degradation of misfolded proteins. This is ATP-dependent Clp protease proteolytic subunit 1 from Leptospira interrogans serogroup Icterohaemorrhagiae serovar copenhageni (strain Fiocruz L1-130).